The following is a 237-amino-acid chain: uncharacterized protein (237 aa).

In terms of domain architecture, DPCK spans 13-218 (VVGLSGGVAT…KSWKPYIFRV (206 aa)). 18 to 25 (GGVATGKS) provides a ligand contact to ATP.

The protein belongs to the CoaE family.

This is an uncharacterized protein from Caenorhabditis elegans.